Here is a 183-residue protein sequence, read N- to C-terminus: Peptide deformylase (183 aa).

Fe cation contacts are provided by Cys110 and His153. Glu154 is an active-site residue. Position 157 (His157) interacts with Fe cation.

Belongs to the polypeptide deformylase family. Requires Fe(2+) as cofactor.

It carries out the reaction N-terminal N-formyl-L-methionyl-[peptide] + H2O = N-terminal L-methionyl-[peptide] + formate. In terms of biological role, removes the formyl group from the N-terminal Met of newly synthesized proteins. Requires at least a dipeptide for an efficient rate of reaction. N-terminal L-methionine is a prerequisite for activity but the enzyme has broad specificity at other positions. The sequence is that of Peptide deformylase from Listeria monocytogenes serotype 4a (strain HCC23).